The chain runs to 682 residues: Iron-phytosiderophore transporter yellow stripe 1 (682 aa).

Residues 1–36 (MDLARRGGAAGADDEGEIERHEPAPEDMESDPAAAR) are disordered. 15 helical membrane-spanning segments follow: residues 56 to 76 (GVVA…KIAL), 79 to 99 (GLVP…LRGW), 124 to 144 (CAVA…LLGL), 167 to 187 (GFGW…LSLI), 236 to 256 (LSFV…CGFV), 288 to 308 (LVNI…WPLI), 334 to 354 (FLCI…VFGV), 396 to 416 (FPAW…AVII), 428 to 448 (VIVA…GTGL), 460 to 480 (IALF…AGLA), 514 to 534 (VAQF…FLLF), 549 to 569 (APYG…FSVL), 574 to 594 (LALS…RDVL), 612 to 632 (FLVG…VFVW), and 640 to 660 (AVFM…IWTF).

Belongs to the YSL (TC 2.A.67.2) family. As to expression, expressed in roots of young maize seedlings. Not detected in leaves of iron-sufficient plants, but accumulates in roots and leaves of iron-deficient plants.

Its subcellular location is the membrane. Its function is as follows. Involved in Fe(3+) uptake. Acts as a proton-coupled symporter for phytosiderophore- and nicotianamine-chelated metals. Capable of transporting either Fe(2+)-nicotianamine or Fe(3+)-phytosiderophore. May transport iron, zinc, nickel, copper and, at a lower rate, manganese and cadmium. The sequence is that of Iron-phytosiderophore transporter yellow stripe 1 (YS1) from Zea mays (Maize).